Here is a 361-residue protein sequence, read N- to C-terminus: Queuine tRNA-ribosyltransferase (361 aa).

Aspartate 92 acts as the Proton acceptor in catalysis. Residues 92-96 (DSGGF), aspartate 146, glutamine 189, and glycine 216 each bind substrate. The RNA binding stretch occupies residues 247-253 (GVGKPAD). Catalysis depends on aspartate 266, which acts as the Nucleophile. The tract at residues 271-275 (TRSGR) is RNA binding; important for wobble base 34 recognition. The Zn(2+) site is built by cysteine 304, cysteine 306, cysteine 309, and histidine 335.

Belongs to the queuine tRNA-ribosyltransferase family. In terms of assembly, homodimer. Within each dimer, one monomer is responsible for RNA recognition and catalysis, while the other monomer binds to the replacement base PreQ1. It depends on Zn(2+) as a cofactor.

The catalysed reaction is 7-aminomethyl-7-carbaguanine + guanosine(34) in tRNA = 7-aminomethyl-7-carbaguanosine(34) in tRNA + guanine. It participates in tRNA modification; tRNA-queuosine biosynthesis. Its function is as follows. Catalyzes the base-exchange of a guanine (G) residue with the queuine precursor 7-aminomethyl-7-deazaguanine (PreQ1) at position 34 (anticodon wobble position) in tRNAs with GU(N) anticodons (tRNA-Asp, -Asn, -His and -Tyr). Catalysis occurs through a double-displacement mechanism. The nucleophile active site attacks the C1' of nucleotide 34 to detach the guanine base from the RNA, forming a covalent enzyme-RNA intermediate. The proton acceptor active site deprotonates the incoming PreQ1, allowing a nucleophilic attack on the C1' of the ribose to form the product. After dissociation, two additional enzymatic reactions on the tRNA convert PreQ1 to queuine (Q), resulting in the hypermodified nucleoside queuosine (7-(((4,5-cis-dihydroxy-2-cyclopenten-1-yl)amino)methyl)-7-deazaguanosine). The sequence is that of Queuine tRNA-ribosyltransferase from Rickettsia peacockii (strain Rustic).